Here is a 381-residue protein sequence, read N- to C-terminus: Putative 8-amino-7-oxononanoate synthase (381 aa).

Arginine 22 serves as a coordination point for substrate. 109 to 110 contacts pyridoxal 5'-phosphate; sequence GF. Residue histidine 134 coordinates substrate. Pyridoxal 5'-phosphate contacts are provided by residues serine 182, 207-210, and 233-236; these read DDAH and TLSK. At lysine 236 the chain carries N6-(pyridoxal phosphate)lysine. Threonine 345 lines the substrate pocket.

This sequence belongs to the class-II pyridoxal-phosphate-dependent aminotransferase family. BioF subfamily. Homodimer. Pyridoxal 5'-phosphate serves as cofactor.

The enzyme catalyses 6-carboxyhexanoyl-[ACP] + L-alanine + H(+) = (8S)-8-amino-7-oxononanoate + holo-[ACP] + CO2. Its pathway is cofactor biosynthesis; biotin biosynthesis. Functionally, catalyzes the decarboxylative condensation of pimeloyl-[acyl-carrier protein] and L-alanine to produce 8-amino-7-oxononanoate (AON), [acyl-carrier protein], and carbon dioxide. The polypeptide is Putative 8-amino-7-oxononanoate synthase (bioF) (Acidiphilium cryptum (strain JF-5)).